The chain runs to 95 residues: MSVTTKDVAYIAELARLKFTDAEQERMTDELNMILHYVDKLNEVDTEGVEPLNTIHDQINVLRADVEHTPLSNEEALKNAPDRQDRFFKVPKVIG.

The protein belongs to the GatC family. As to quaternary structure, heterotrimer of A, B and C subunits.

It catalyses the reaction L-glutamyl-tRNA(Gln) + L-glutamine + ATP + H2O = L-glutaminyl-tRNA(Gln) + L-glutamate + ADP + phosphate + H(+). The enzyme catalyses L-aspartyl-tRNA(Asn) + L-glutamine + ATP + H2O = L-asparaginyl-tRNA(Asn) + L-glutamate + ADP + phosphate + 2 H(+). Allows the formation of correctly charged Asn-tRNA(Asn) or Gln-tRNA(Gln) through the transamidation of misacylated Asp-tRNA(Asn) or Glu-tRNA(Gln) in organisms which lack either or both of asparaginyl-tRNA or glutaminyl-tRNA synthetases. The reaction takes place in the presence of glutamine and ATP through an activated phospho-Asp-tRNA(Asn) or phospho-Glu-tRNA(Gln). The chain is Aspartyl/glutamyl-tRNA(Asn/Gln) amidotransferase subunit C from Chlorobaculum parvum (strain DSM 263 / NCIMB 8327) (Chlorobium vibrioforme subsp. thiosulfatophilum).